The following is a 96-amino-acid chain: ATP synthase subunit c (96 aa).

Transmembrane regions (helical) follow at residues 24-44 (HVGA…VGVG) and 75-95 (AIAE…IFVA).

The protein belongs to the ATPase C chain family. F-type ATPases have 2 components, F(1) - the catalytic core - and F(0) - the membrane proton channel. F(1) has five subunits: alpha(3), beta(3), gamma(1), delta(1), epsilon(1). F(0) has three main subunits: a(1), b(2) and c(10-14). The alpha and beta chains form an alternating ring which encloses part of the gamma chain. F(1) is attached to F(0) by a central stalk formed by the gamma and epsilon chains, while a peripheral stalk is formed by the delta and b chains.

The protein resides in the cell membrane. Functionally, f(1)F(0) ATP synthase produces ATP from ADP in the presence of a proton or sodium gradient. F-type ATPases consist of two structural domains, F(1) containing the extramembraneous catalytic core and F(0) containing the membrane proton channel, linked together by a central stalk and a peripheral stalk. During catalysis, ATP synthesis in the catalytic domain of F(1) is coupled via a rotary mechanism of the central stalk subunits to proton translocation. Its function is as follows. Key component of the F(0) channel; it plays a direct role in translocation across the membrane. A homomeric c-ring of between 10-14 subunits forms the central stalk rotor element with the F(1) delta and epsilon subunits. The protein is ATP synthase subunit c of Mycoplasmoides gallisepticum (strain R(low / passage 15 / clone 2)) (Mycoplasma gallisepticum).